The sequence spans 101 residues: MNLKPLNDRVLVKRLESEEKTAGGLYIPDTAKEKPSRGEVVAVGPGKHTDDGKLIPMAVKAGDTVLFNKYAGTEVKLDGVEHLVMREDDILAVITGETGRK.

The protein belongs to the GroES chaperonin family. Heptamer of 7 subunits arranged in a ring. Interacts with the chaperonin GroEL.

It is found in the cytoplasm. Its function is as follows. Together with the chaperonin GroEL, plays an essential role in assisting protein folding. The GroEL-GroES system forms a nano-cage that allows encapsulation of the non-native substrate proteins and provides a physical environment optimized to promote and accelerate protein folding. GroES binds to the apical surface of the GroEL ring, thereby capping the opening of the GroEL channel. In Lawsonia intracellularis, this protein is Co-chaperonin GroES.